We begin with the raw amino-acid sequence, 135 residues long: uncharacterized protein (135 aa).

Positions 8-123 (PKGIIVLKTL…IFIYVAINKT (116 aa)) constitute a HotDog ACOT-type domain.

This sequence belongs to the acyl coenzyme A hydrolase family.

This is an uncharacterized protein from Buchnera aphidicola subsp. Acyrthosiphon pisum (strain APS) (Acyrthosiphon pisum symbiotic bacterium).